The primary structure comprises 217 residues: Large ribosomal subunit protein uL1 (217 aa).

This sequence belongs to the universal ribosomal protein uL1 family.

The protein is Large ribosomal subunit protein uL1 (RPL10A) of Eremothecium gossypii (strain ATCC 10895 / CBS 109.51 / FGSC 9923 / NRRL Y-1056) (Yeast).